A 166-amino-acid polypeptide reads, in one-letter code: UPF0304 protein VV1_2093 (166 aa).

The protein belongs to the UPF0304 family.

This Vibrio vulnificus (strain CMCP6) protein is UPF0304 protein VV1_2093.